Here is a 466-residue protein sequence, read N- to C-terminus: Cysteine--tRNA ligase (466 aa).

C29 serves as a coordination point for Zn(2+). The 'HIGH' region motif lies at 31 to 41 (PTVYNYIHIGN). Residues C209, H234, and E238 each contribute to the Zn(2+) site. The 'KMSKS' region signature appears at 266–270 (KMSKS). K269 provides a ligand contact to ATP. S270 bears the Phosphoserine mark.

It belongs to the class-I aminoacyl-tRNA synthetase family. In terms of assembly, monomer. Zn(2+) is required as a cofactor.

The protein localises to the cytoplasm. The catalysed reaction is tRNA(Cys) + L-cysteine + ATP = L-cysteinyl-tRNA(Cys) + AMP + diphosphate. The chain is Cysteine--tRNA ligase from Bacillus velezensis (strain DSM 23117 / BGSC 10A6 / LMG 26770 / FZB42) (Bacillus amyloliquefaciens subsp. plantarum).